The chain runs to 211 residues: MEAQGSSHDISRLLCLGVKEDSEEQHGQYLGDVKAEAFFQAGEGRDEKGAQGQPGEGAVGTEGEGEELNGGEGHFGPGVPGPVGEGDKDGGTRASGMEEEQHEPVAEGTESVKSEDKQMPLRRPGSTQRRLAELERILLSSGSSSGGRSLIDGWISVCPECRNWFKIRRAAYRRNRRRRTPIPEHFRATSGCPACLGARWGVRCPFATPRF.

The disordered stretch occupies residues 38 to 129; that stretch reads FFQAGEGRDE…PLRRPGSTQR (92 aa). 2 stretches are compositionally biased toward gly residues: residues 52-62 and 70-84; these read GQPGEGAVGTE and GGEG…GPVG. Positions 102–119 are enriched in basic and acidic residues; that stretch reads HEPVAEGTESVKSEDKQM. Positions 119–176 form a DNA-binding region, homeobox; atypical; the sequence is MPLRRPGSTQRRLAELERILLSSGSSSGGRSLIDGWISVCPECRNWFKIRRAAYRRNR.

In terms of tissue distribution, highly expressed in placenta. Lower levels in testis, epididymis, ovary and skeletal muscle.

It is found in the nucleus. Transcription factor required for differentiation of embryonic stem cells (ESCs) into primordial germ cells. The polypeptide is Homeobox protein Rhox5 (Rhox5) (Rattus norvegicus (Rat)).